Consider the following 284-residue polypeptide: Bifunctional protein FolD (284 aa).

NADP(+) contacts are provided by residues 166-168 (GRS) and Ser-191.

It belongs to the tetrahydrofolate dehydrogenase/cyclohydrolase family. In terms of assembly, homodimer.

The catalysed reaction is (6R)-5,10-methylene-5,6,7,8-tetrahydrofolate + NADP(+) = (6R)-5,10-methenyltetrahydrofolate + NADPH. It carries out the reaction (6R)-5,10-methenyltetrahydrofolate + H2O = (6R)-10-formyltetrahydrofolate + H(+). It participates in one-carbon metabolism; tetrahydrofolate interconversion. Catalyzes the oxidation of 5,10-methylenetetrahydrofolate to 5,10-methenyltetrahydrofolate and then the hydrolysis of 5,10-methenyltetrahydrofolate to 10-formyltetrahydrofolate. In Leptospira borgpetersenii serovar Hardjo-bovis (strain JB197), this protein is Bifunctional protein FolD.